Consider the following 311-residue polypeptide: Giardin subunit alpha-8 (311 aa).

4 Annexin repeats span residues 5 to 73 (RKAY…IRCW), 75 to 146 (NRHE…DRWM), 154 to 223 (NNVK…AAHY), and 227 to 295 (EPSK…SLWR).

The protein belongs to the annexin family. Giardin subunit alpha subfamily.

The protein localises to the cytoplasm. The protein resides in the cytoskeleton. In terms of biological role, giardins are involved in parasite attachment to the intestinal mucosa and in the cytoskeletal disassembly and reassembly that marks the transition from infectious trophozoite to transmissible cyst. They may interact with other cytoskeletal proteins such as microtubules in the microribbons or crossbridges, to maintain the integrity of the ventral disk. The polypeptide is Giardin subunit alpha-8 (Giardia intestinalis (Giardia lamblia)).